The following is a 579-amino-acid chain: V-type ATP synthase alpha chain (579 aa).

227-234 is an ATP binding site; that stretch reads GGFGTGKT.

Belongs to the ATPase alpha/beta chains family.

It carries out the reaction ATP + H2O + 4 H(+)(in) = ADP + phosphate + 5 H(+)(out). In terms of biological role, produces ATP from ADP in the presence of a proton gradient across the membrane. The V-type alpha chain is a catalytic subunit. The sequence is that of V-type ATP synthase alpha chain from Anaeromyxobacter dehalogenans (strain 2CP-C).